The sequence spans 354 residues: DNA integrity scanning protein DisA (354 aa).

The 139-residue stretch at 6–144 (DDELKKILKI…GDIKYVLRDS (139 aa)) folds into the DAC domain. ATP is bound by residues G73, L91, and 104-108 (TRHRT).

Belongs to the DisA family. In terms of assembly, homooctamer. Mg(2+) serves as cofactor.

The catalysed reaction is 2 ATP = 3',3'-c-di-AMP + 2 diphosphate. Functionally, participates in a DNA-damage check-point that is active prior to asymmetric division when DNA is damaged. DisA forms globular foci that rapidly scan along the chromosomes during sporulation, searching for lesions. When a lesion is present, DisA pauses at the lesion site. This triggers a cellular response that culminates in a temporary block in sporulation initiation. In terms of biological role, also has diadenylate cyclase activity, catalyzing the condensation of 2 ATP molecules into cyclic di-AMP (c-di-AMP). c-di-AMP acts as a signaling molecule that couples DNA integrity with progression of sporulation. The rise in c-di-AMP level generated by DisA while scanning the chromosome, operates as a positive signal that advances sporulation; upon encountering a lesion, the DisA focus arrests at the damaged site and halts c-di-AMP synthesis. The sequence is that of DNA integrity scanning protein DisA from Clostridium perfringens (strain 13 / Type A).